We begin with the raw amino-acid sequence, 252 residues long: 2-succinyl-6-hydroxy-2,4-cyclohexadiene-1-carboxylate synthase (252 aa).

This sequence belongs to the AB hydrolase superfamily. MenH family. As to quaternary structure, monomer.

The catalysed reaction is 5-enolpyruvoyl-6-hydroxy-2-succinyl-cyclohex-3-ene-1-carboxylate = (1R,6R)-6-hydroxy-2-succinyl-cyclohexa-2,4-diene-1-carboxylate + pyruvate. It functions in the pathway quinol/quinone metabolism; 1,4-dihydroxy-2-naphthoate biosynthesis; 1,4-dihydroxy-2-naphthoate from chorismate: step 3/7. Its pathway is quinol/quinone metabolism; menaquinone biosynthesis. Catalyzes a proton abstraction reaction that results in 2,5-elimination of pyruvate from 2-succinyl-5-enolpyruvyl-6-hydroxy-3-cyclohexene-1-carboxylate (SEPHCHC) and the formation of 2-succinyl-6-hydroxy-2,4-cyclohexadiene-1-carboxylate (SHCHC). The chain is 2-succinyl-6-hydroxy-2,4-cyclohexadiene-1-carboxylate synthase from Salmonella agona (strain SL483).